A 214-amino-acid polypeptide reads, in one-letter code: Charged multivesicular body protein 2b (214 aa).

Residues 25 to 55 (QRQIARDRTALEKQEKQLEMEIKKMAKTGNR) adopt a coiled-coil conformation. The segment at 178 to 199 (MAHAPSAARKTPSAATAKADGI) is disordered. Positions 202–212 (EDIERQLKALG) match the MIT-interacting motif motif.

It belongs to the SNF7 family. Probable core component of the endosomal sorting required for transport complex III (ESCRT-III). ESCRT-III components are thought to multimerize to form a flat lattice on the perimeter membrane of the endosome.

Its subcellular location is the cytoplasm. The protein localises to the cytosol. The protein resides in the late endosome membrane. Probable core component of the endosomal sorting required for transport complex III (ESCRT-III) which is involved in multivesicular bodies (MVBs) formation and sorting of endosomal cargo proteins into MVBs. MVBs contain intraluminal vesicles (ILVs) that are generated by invagination and scission from the limiting membrane of the endosome and mostly are delivered to lysosomes enabling degradation of membrane proteins, such as stimulated growth factor receptors, lysosomal enzymes and lipids. The chain is Charged multivesicular body protein 2b (chmp2b) from Danio rerio (Zebrafish).